Reading from the N-terminus, the 899-residue chain is MPQVDPDLFDPGQFQAELALKSSPIPAYKKALRCAREVLDARFQEGRDIRRLIEDRAWFVDQILALAWNRFDWSEDADIALIAVGGYGRGELHPYSDIDLLILMDGADHEVFREPIEGFLTLLWDIGLEVGQSVRSLAECAEEAQADLTVITNLMESRTIAGPEHLRQRMQEVTSAQRMWPSRAFFLAKRDEQKTRHARYNDTEYNLEPNVKGSPGGLRDIQTLLWIARRQFGTINLHAMVGQGFLLESEYTLLASSQEFLWKVRYALHMLAGRAEDRLLFDLQRQIAGLLGYEDSDAKLAVERFMQKYYRVVLGIAELTELVFQHFEEVILPGDAAGRVEPLNERFQVRDGYLEVTHAGVFQETPSALLEIFVLLARRPEIRGVRADTIRLLRDHRYLIDDAFRRDPHNTGLFIELFKSRQGIHRNLRRMNRYGILGRYLPEFGHIVGQMQHDLFHIYTVDAHTLNLIKNLRKLFWPELAEKYPLASKLIEKLPKPELIYLAGLYHDIGKGRGGDHSELGAADALAFCQRHDLPAMDTQLIVWLVRNHLLMSTTAQRKDLSDPQVIFDFAQKVRDQTYLDYLYVLTVADINATNPTLWNSWRASLLRQLYTETKHALRRGLEQPVGREEQIRQTQKAALDILVRSGTDPDDAEHLWTQLGDDYFLRHTSSDIAWHTEAILQHPSSGGPLVLIKETTQREFEGATQIFIYAPDQHDFFAVTVAAMDQLNLSIHDARVITSTSQFTLDTYIVLDADGGSIGNNPARIQEIRQGLVEALRNPADYPTIIQRRVPRQLKHFAFAPQVTIQNDALRPVTILEIIAPDRPGLLARIGKIFLDFDLSLQNAKIATLGERVEDVFFVTDAHNQPLSDPELCARLQLAIAEQLADGDSYIQPSRISI.

Residues 1–342 (MPQVDPDLFD…PGDAAGRVEP (342 aa)) form a uridylyltransferase region. Residues 343–705 (LNERFQVRDG…TTQREFEGAT (363 aa)) are uridylyl-removing. The HD domain occupies 461 to 583 (VDAHTLNLIK…VRDQTYLDYL (123 aa)). 2 consecutive ACT domains span residues 706-789 (QIFI…IIQR) and 816-899 (ILEI…RISI).

The protein belongs to the GlnD family. Mg(2+) serves as cofactor.

It catalyses the reaction [protein-PII]-L-tyrosine + UTP = [protein-PII]-uridylyl-L-tyrosine + diphosphate. The enzyme catalyses [protein-PII]-uridylyl-L-tyrosine + H2O = [protein-PII]-L-tyrosine + UMP + H(+). With respect to regulation, uridylyltransferase (UTase) activity is inhibited by glutamine, while glutamine activates uridylyl-removing (UR) activity. Modifies, by uridylylation and deuridylylation, the PII regulatory proteins (GlnB and homologs), in response to the nitrogen status of the cell that GlnD senses through the glutamine level. Under low glutamine levels, catalyzes the conversion of the PII proteins and UTP to PII-UMP and PPi, while under higher glutamine levels, GlnD hydrolyzes PII-UMP to PII and UMP (deuridylylation). Thus, controls uridylylation state and activity of the PII proteins, and plays an important role in the regulation of nitrogen fixation and metabolism. The chain is Bifunctional uridylyltransferase/uridylyl-removing enzyme from Azotobacter vinelandii (strain DJ / ATCC BAA-1303).